We begin with the raw amino-acid sequence, 149 residues long: Large ribosomal subunit protein uL15 (149 aa).

The disordered stretch occupies residues 30–63 (GLGKTAGRGHKGSFARKGGGKIKPGFEGGQTPMQ). Positions 36-49 (GRGHKGSFARKGGG) are enriched in basic residues.

It belongs to the universal ribosomal protein uL15 family. As to quaternary structure, part of the 50S ribosomal subunit.

Binds to the 23S rRNA. In Xylella fastidiosa (strain 9a5c), this protein is Large ribosomal subunit protein uL15.